The chain runs to 120 residues: uncharacterized protein (120 aa).

It to phage T4 y06Q.

This is an uncharacterized protein from Escherichia coli (strain K12).